Here is a 406-residue protein sequence, read N- to C-terminus: Tyrosine--tRNA ligase (406 aa).

Position 34 (Tyr-34) interacts with L-tyrosine. The short motif at 39–48 (PTADSLHVGH) is the 'HIGH' region element. Positions 167 and 171 each coordinate L-tyrosine. The 'KMSKS' region motif lies at 227–231 (KMGKT). ATP is bound at residue Lys-230. The region spanning 339-404 (RKIVDVLFEA…GKKEYHRLLV (66 aa)) is the S4 RNA-binding domain.

This sequence belongs to the class-I aminoacyl-tRNA synthetase family. TyrS type 1 subfamily. As to quaternary structure, homodimer.

Its subcellular location is the cytoplasm. The enzyme catalyses tRNA(Tyr) + L-tyrosine + ATP = L-tyrosyl-tRNA(Tyr) + AMP + diphosphate + H(+). Its function is as follows. Catalyzes the attachment of tyrosine to tRNA(Tyr) in a two-step reaction: tyrosine is first activated by ATP to form Tyr-AMP and then transferred to the acceptor end of tRNA(Tyr). The polypeptide is Tyrosine--tRNA ligase (Caldanaerobacter subterraneus subsp. tengcongensis (strain DSM 15242 / JCM 11007 / NBRC 100824 / MB4) (Thermoanaerobacter tengcongensis)).